The following is a 1173-amino-acid chain: Pyruvate-flavodoxin oxidoreductase (1173 aa).

2 consecutive 4Fe-4S ferredoxin-type domains span residues 681–710 and 735–766; these read NVPV…PVLI and YRLA…MQPL. 11 residues coordinate [4Fe-4S] cluster: Cys-690, Cys-693, Cys-696, Cys-700, Cys-744, Cys-747, Cys-750, Cys-754, Cys-810, Cys-813, and Cys-838. The segment covering 922–933 has biased composition (basic and acidic residues); the sequence is GEGTRERAEKVG. Positions 922 to 946 are disordered; that stretch reads GEGTRERAEKVGDTSGFANAREKSR. A [4Fe-4S] cluster-binding site is contributed by Cys-1075.

This sequence belongs to the pyruvate:ferredoxin/flavodoxin oxidoreductase family. Requires [4Fe-4S] cluster as cofactor.

It catalyses the reaction oxidized [flavodoxin] + pyruvate + CoA + 2 H(+) = reduced [flavodoxin] + acetyl-CoA + CO2. Its function is as follows. Oxidoreductase required for the transfer of electrons from pyruvate to flavodoxin, which reduces nitrogenase. The sequence is that of Pyruvate-flavodoxin oxidoreductase (nifJ) from Enterobacter agglomerans (Erwinia herbicola).